The following is a 206-amino-acid chain: uncharacterized protein (206 aa).

The chain crosses the membrane as a helical span at residues 21–43 (VPINITMSICALTALLKSYSITG).

Its subcellular location is the membrane. This is an uncharacterized protein from Acanthamoeba polyphaga (Amoeba).